A 63-amino-acid chain; its full sequence is UPF0434 protein GDI0182/Gdia_2252 (63 aa).

This sequence belongs to the UPF0434 family.

The polypeptide is UPF0434 protein GDI0182/Gdia_2252 (Gluconacetobacter diazotrophicus (strain ATCC 49037 / DSM 5601 / CCUG 37298 / CIP 103539 / LMG 7603 / PAl5)).